The chain runs to 131 residues: (R)-mandelonitrile lyase (131 aa).

The 63-residue stretch at 42 to 104 folds into the Cupin type-2 domain; that stretch reads VTFEPGARTA…WHGAAPTTAM (63 aa). The Mn(2+) site is built by His53, His55, Gln59, His94, and His96.

It belongs to the cupin domain-containing hydroxynitrile lyase family. Requires Mn(2+) as cofactor.

The catalysed reaction is (R)-mandelonitrile = benzaldehyde + hydrogen cyanide. In terms of biological role, hydroxynitrile lyase which catalyzes mandelonitrile formation from benzaldehyde and hydrogen cyanide with high stereoselectivity in presence of manganese. In Granulicella tundricola (strain ATCC BAA-1859 / DSM 23138 / MP5ACTX9), this protein is (R)-mandelonitrile lyase.